The following is a 266-amino-acid chain: Ribosomal RNA small subunit methyltransferase A (266 aa).

Residues Asn-12, Leu-14, Gly-39, Glu-61, Asp-87, and Asn-107 each coordinate S-adenosyl-L-methionine.

This sequence belongs to the class I-like SAM-binding methyltransferase superfamily. rRNA adenine N(6)-methyltransferase family. RsmA subfamily.

The protein localises to the cytoplasm. The catalysed reaction is adenosine(1518)/adenosine(1519) in 16S rRNA + 4 S-adenosyl-L-methionine = N(6)-dimethyladenosine(1518)/N(6)-dimethyladenosine(1519) in 16S rRNA + 4 S-adenosyl-L-homocysteine + 4 H(+). Functionally, specifically dimethylates two adjacent adenosines (A1518 and A1519) in the loop of a conserved hairpin near the 3'-end of 16S rRNA in the 30S particle. May play a critical role in biogenesis of 30S subunits. This is Ribosomal RNA small subunit methyltransferase A from Nitratidesulfovibrio vulgaris (strain DP4) (Desulfovibrio vulgaris).